Here is a 168-residue protein sequence, read N- to C-terminus: Photosystem I assembly protein Ycf3 (168 aa).

TPR repeat units lie at residues 35 to 68 (AFTY…EIDP), 72 to 105 (SYIL…NPFL), and 120 to 153 (GEQA…TPGN).

It belongs to the Ycf3 family.

Its subcellular location is the plastid. It localises to the chloroplast thylakoid membrane. Its function is as follows. Essential for the assembly of the photosystem I (PSI) complex. May act as a chaperone-like factor to guide the assembly of the PSI subunits. The chain is Photosystem I assembly protein Ycf3 from Ranunculus macranthus (Large buttercup).